The primary structure comprises 406 residues: Arginine deiminase (406 aa).

The active-site Amidino-cysteine intermediate is the C396.

It belongs to the arginine deiminase family.

Its subcellular location is the cytoplasm. It catalyses the reaction L-arginine + H2O = L-citrulline + NH4(+). Its pathway is amino-acid degradation; L-arginine degradation via ADI pathway; carbamoyl phosphate from L-arginine: step 1/2. The protein is Arginine deiminase of Salmonella typhimurium (strain LT2 / SGSC1412 / ATCC 700720).